We begin with the raw amino-acid sequence, 437 residues long: Regulator of phospholipase D SRF1 (437 aa).

The segment at 1 to 24 is disordered; it reads MGDSNSSQEAYSDTTSTNASRIAD. Residues 1 to 267 are Cytoplasmic-facing; that stretch reads MGDSNSSQEA…LTSLLLDNQY (267 aa). Phosphoserine is present on residues Ser45 and Ser167. Residues 268–288 traverse the membrane as a helical segment; it reads LILGLRIFTGILSCISLALAI. The Extracellular segment spans residues 289-308; that stretch reads KIFQNSRSNNTISESKIGQQ. An N-linked (GlcNAc...) asparagine glycan is attached at Asn297. The helical transmembrane segment at 309 to 329 threads the bilayer; sequence PSTIMAICVNAVAIAYIIYIA. The Cytoplasmic segment spans residues 330-348; sequence HDEFAGKPVGLRNPLSKLK. Residues 349 to 369 traverse the membrane as a helical segment; it reads LILLDLLFIIFSSANLALAFN. At 370 to 403 the chain is on the extracellular side; sequence TRFDKEWVCTSIRRSNGSTYGYPKIPRICRKQEA. Asn385 carries N-linked (GlcNAc...) asparagine glycosylation. Residues 404 to 424 traverse the membrane as a helical segment; it reads LSAFLFVALFMWVITFSISIV. At 425–437 the chain is on the cytoplasmic side; the sequence is RVVEKVSSITNRN.

In terms of assembly, interacts with SPO14.

It localises to the membrane. Functionally, regulator of phospholipase D (SPO14) which is required for SPO14 catalytic activity in mitotic cells. Essential to buffer the toxic effects of C16:0 platelet activating factor. The protein is Regulator of phospholipase D SRF1 (SRF1) of Saccharomyces cerevisiae (strain ATCC 204508 / S288c) (Baker's yeast).